A 161-amino-acid chain; its full sequence is Long arms of the bivalent protein 1 (161 aa).

The PP1 binding motif motif lies at 72–75; it reads KVIW. A disordered region spans residues 85–161; that stretch reads GTMFEDFKED…SDKTMCSGQS (77 aa). Residues 97-115 show a composition bias toward polar residues; the sequence is QESVSSISNNEANWGSSVN. Residues 120 to 129 show a composition bias toward basic and acidic residues; sequence NYEKMQKEET. The segment covering 130–151 has biased composition (acidic residues); that stretch reads FDPYDSDSDTSEDSDFDEDFED.

Interacts with gsp-1 and gsp-2; the interaction is direct.

The protein localises to the chromosome. The protein resides in the nucleus. In terms of biological role, involved in sister chromatid cohesion during mitosis and meiosis. In association with the gsp-2 phosphatase, it both restricts the localization and antagonizes the function of the air-2 kinase during meiosis I and mitosis to promote chromatid cohesion and spindle attachment. This in turn, drives germ cell immortality. Furthermore, may play a role in ensuring the timely assembly of the synaptonemal complex during prophase I of meiosis. The chain is Long arms of the bivalent protein 1 from Caenorhabditis elegans.